We begin with the raw amino-acid sequence, 159 residues long: MSDRVYLTRDGYNRLKDELHELLHVTRAEVLEKIAEARSHGDLSENAEYDAAREQQSQTEARIADLESKLSSATILDPKHIKTDKVYILTSVELLNLDDKKETLEYTLVSSEESDSDLGKISVRSPVGRALIGKAVGDKVTIIVPKGELHYEVKKIFVK.

A coiled-coil region spans residues 44-75; the sequence is SENAEYDAAREQQSQTEARIADLESKLSSATI.

Belongs to the GreA/GreB family.

Functionally, necessary for efficient RNA polymerase transcription elongation past template-encoded arresting sites. The arresting sites in DNA have the property of trapping a certain fraction of elongating RNA polymerases that pass through, resulting in locked ternary complexes. Cleavage of the nascent transcript by cleavage factors such as GreA or GreB allows the resumption of elongation from the new 3'terminus. GreA releases sequences of 2 to 3 nucleotides. This chain is Transcription elongation factor GreA, found in Chlorobium phaeovibrioides (strain DSM 265 / 1930) (Prosthecochloris vibrioformis (strain DSM 265)).